The following is a 315-amino-acid chain: MKVSLIGAGNIGGTLAYLIASKKLASEVELIDVNGDLARGKALDVSQTLPLIGYTMKINGSANMERIKGSSVIIITAGIPRKPGMTREELIDVNAVVMKEVGEKIKKFAPKAFVIVVTNPLDVMVWVLYKAAEISPDKIVGMAGVLDASRMNLFLAQELGVSVADVKSLVLGSHGDSMVPLFRHSTVSGMSLPELVSVGLITKDKVDSIIERTRSGGAEIVALLKTGSAYYTPAASVLEMAEAYLLDQKKTLVCSVMMRGRYGVEDDIFSGIPVIMGSGGVERVIELDLTPDERRMFENSVAATRKLVLEARKYF.

Residues 7–12 and Asp32 contribute to the NAD(+) site; that span reads GAGNIG. Residues Arg81 and Arg87 each contribute to the substrate site. NAD(+)-binding positions include Asn94 and 117–119; that span reads VTN. Substrate contacts are provided by Asn119 and Arg150. The active-site Proton acceptor is His174.

Belongs to the LDH/MDH superfamily. MDH type 3 family.

The catalysed reaction is (S)-malate + NAD(+) = oxaloacetate + NADH + H(+). Its function is as follows. Catalyzes the reversible oxidation of malate to oxaloacetate. In Neorickettsia sennetsu (strain ATCC VR-367 / Miyayama) (Ehrlichia sennetsu), this protein is Malate dehydrogenase.